A 206-amino-acid chain; its full sequence is Large ribosomal subunit protein uL4 (206 aa).

The tract at residues 63–97 is disordered; it reads MYKQKGTGRARHHSARAPQFRGGGKAHGPVVRSHE. Positions 64–77 are enriched in basic residues; it reads YKQKGTGRARHHSA.

This sequence belongs to the universal ribosomal protein uL4 family. In terms of assembly, part of the 50S ribosomal subunit.

One of the primary rRNA binding proteins, this protein initially binds near the 5'-end of the 23S rRNA. It is important during the early stages of 50S assembly. It makes multiple contacts with different domains of the 23S rRNA in the assembled 50S subunit and ribosome. Functionally, forms part of the polypeptide exit tunnel. The sequence is that of Large ribosomal subunit protein uL4 from Rhizobium etli (strain ATCC 51251 / DSM 11541 / JCM 21823 / NBRC 15573 / CFN 42).